The following is a 672-amino-acid chain: Leucine-rich repeat receptor-like protein kinase PXC1 (672 aa).

The signal sequence occupies residues 1-21; sequence MAAKPLLLPLLLLLHLSITLA. Residues 22–269 lie on the Extracellular side of the membrane; it reads QNDTNALTLF…IHSHRGIKPG (248 aa). N-linked (GlcNAc...) asparagine glycans are attached at residues N23, N44, and N101. The stretch at 87–110 is one LRR 1 repeat; that stretch reads LDQLRLLDLHDNRLNGTVSPLTNC. K111 participates in a covalent cross-link: Glycyl lysine isopeptide (Lys-Gly) (interchain with G-Cter in ubiquitin). LRR repeat units lie at residues 112 to 134, 135 to 158, 160 to 181, and 182 to 205; these read NLRL…ISFL, KRMI…ILGF, RVLT…FSQM, and KSLL…VVKK. Residues N188 and N197 are each glycosylated (N-linked (GlcNAc...) asparagine). Positions 233–249 are enriched in polar residues; that stretch reads ESSNTDQIVPSNPTSIP. The segment at 233 to 254 is disordered; the sequence is ESSNTDQIVPSNPTSIPHSPVS. The helical transmembrane segment at 270–290 threads the bilayer; sequence IIAAVIGGCVAVIVLVSFGFA. At 291-672 the chain is on the cytoplasmic side; the sequence is FCCGRLDRNG…MSPSLATTDG (382 aa). The segment at 300-333 is disordered; sequence GERSKSGSVETGFVGGGEGKRRSSYGEGGESDAT. A Protein kinase domain is found at 357–645; that stretch reads KASAEMLGKG…AEVVKMVEEI (289 aa). ATP contacts are provided by residues 363–371 and K386; that span reads LGKGSLGTV. Residues 650–672 form a disordered region; that stretch reads SPVGEDFDESRNSMSPSLATTDG. Over residues 661 to 672 the composition is skewed to polar residues; the sequence is NSMSPSLATTDG.

It belongs to the protein kinase superfamily. Ser/Thr protein kinase family. As to expression, expressed in the vascular strands of cotyledons, the shoot apex, hypocotyls, roots, leaves, stems and flowers.

It is found in the cell membrane. In terms of biological role, leucine-rich repeat receptor-like protein kinase involved in secondary cell wall formation in xylem fibers. May play a role in a regulatory network which also incorporates the TDR/PXY signaling pathway and regulates the maturation of interfascicular fiber cells. May promote the initiation of secondary cell wall deposition during the procedure of cell expansion. The sequence is that of Leucine-rich repeat receptor-like protein kinase PXC1 from Arabidopsis thaliana (Mouse-ear cress).